The following is a 136-amino-acid chain: Methenyltetrahydromethanopterin cyclohydrolase (136 aa).

This sequence belongs to the MCH family.

It is found in the cytoplasm. The enzyme catalyses 5,10-methenyl-5,6,7,8-tetrahydromethanopterin + H2O = N(5)-formyl-5,6,7,8-tetrahydromethanopterin + H(+). Its pathway is one-carbon metabolism; formaldehyde degradation; formate from formaldehyde (H(4)MPT route): step 3/5. Its function is as follows. Catalyzes the hydrolysis of methenyl-H(4)MPT(+) to 5-formyl-H(4)MPT. This chain is Methenyltetrahydromethanopterin cyclohydrolase (mch), found in Methylococcus thermophilus.